The following is a 319-amino-acid chain: Major intracellular serine protease (319 aa).

The propeptide occupies 1 to 17 (MNGEIRLIPYVTNEQIM). Residues 23–307 (PEGIKVIKAP…FLYLTAPDEL (285 aa)) form the Peptidase S8 domain. Residues aspartate 50, histidine 87, and serine 246 each act as charge relay system in the active site.

The protein belongs to the peptidase S8 family. As to quaternary structure, homodimer.

The protein localises to the cytoplasm. Major intracellular protease produced by Bacillus subtilis. This is Major intracellular serine protease (isp) from Bacillus subtilis (strain 168).